Consider the following 430-residue polypeptide: Dihydrofolate synthase/folylpolyglutamate synthase (430 aa).

Residue 51-54 participates in ATP binding; sequence GKGS. Mg(2+) is bound at residue serine 75. 114-117 provides a ligand contact to 7,8-dihydropteroate; it reads TEYG. Glutamate 145 provides a ligand contact to Mg(2+). 152-154 is a 7,8-dihydropteroate binding site; that stretch reads FDS. Histidine 172 contacts Mg(2+). ATP contacts are provided by glutamine 263, arginine 302, and aspartate 315.

Belongs to the folylpolyglutamate synthase family. As to quaternary structure, monomer. Mg(2+) serves as cofactor.

The enzyme catalyses 7,8-dihydropteroate + L-glutamate + ATP = 7,8-dihydrofolate + ADP + phosphate + H(+). The catalysed reaction is (6S)-5,6,7,8-tetrahydrofolyl-(gamma-L-Glu)(n) + L-glutamate + ATP = (6S)-5,6,7,8-tetrahydrofolyl-(gamma-L-Glu)(n+1) + ADP + phosphate + H(+). Its pathway is cofactor biosynthesis; tetrahydrofolate biosynthesis; 7,8-dihydrofolate from 2-amino-4-hydroxy-6-hydroxymethyl-7,8-dihydropteridine diphosphate and 4-aminobenzoate: step 2/2. It functions in the pathway cofactor biosynthesis; tetrahydrofolylpolyglutamate biosynthesis. In terms of biological role, functions in two distinct reactions of the de novo folate biosynthetic pathway. Catalyzes the addition of a glutamate residue to dihydropteroate (7,8-dihydropteroate or H2Pte) to form dihydrofolate (7,8-dihydrofolate monoglutamate or H2Pte-Glu). Also catalyzes successive additions of L-glutamate to tetrahydrofolate, leading to folylpolyglutamate derivatives. This Bacillus subtilis (strain 168) protein is Dihydrofolate synthase/folylpolyglutamate synthase (folC).